The primary structure comprises 172 residues: 3-hydroxydecanoyl-[acyl-carrier-protein] dehydratase (172 aa).

His71 is a catalytic residue.

Belongs to the thioester dehydratase family. FabA subfamily. In terms of assembly, homodimer.

The protein localises to the cytoplasm. The catalysed reaction is a (3R)-hydroxyacyl-[ACP] = a (2E)-enoyl-[ACP] + H2O. It carries out the reaction (3R)-hydroxydecanoyl-[ACP] = (2E)-decenoyl-[ACP] + H2O. The enzyme catalyses (2E)-decenoyl-[ACP] = (3Z)-decenoyl-[ACP]. It participates in lipid metabolism; fatty acid biosynthesis. In terms of biological role, necessary for the introduction of cis unsaturation into fatty acids. Catalyzes the dehydration of (3R)-3-hydroxydecanoyl-ACP to E-(2)-decenoyl-ACP and then its isomerization to Z-(3)-decenoyl-ACP. Can catalyze the dehydratase reaction for beta-hydroxyacyl-ACPs with saturated chain lengths up to 16:0, being most active on intermediate chain length. This Brucella abortus (strain S19) protein is 3-hydroxydecanoyl-[acyl-carrier-protein] dehydratase.